Reading from the N-terminus, the 382-residue chain is Sphingosine 1-phosphate receptor 1 (382 aa).

Over 1–46 (MGSTRIPLVKALHSPVSDYVNYDIIVRHYNYTGKLKISADKDNGIK) the chain is Extracellular. The residue at position 10 (Lys-10) is an N6-acetyllysine. Residue Asn-30 is glycosylated (N-linked (GlcNAc...) asparagine). Residues 47–68 (LISVVFILICCFIILENIFVLL) form a helical membrane-spanning segment. The Cytoplasmic segment spans residues 69-82 (TIWKTKKFHRPMYY). The helical transmembrane segment at 83 to 104 (FIGNLALSDLLAGVAYTANLLL) threads the bilayer. Residues 105–116 (SGATTYKLTPAQ) lie on the Extracellular side of the membrane. The chain crosses the membrane as a helical span at residues 117–138 (WFLREGSMFVALSASVFSLLAI). 120-121 (RE) contacts sphing-4-enine 1-phosphate. The Cytoplasmic segment spans residues 139 to 160 (AIERYITMLKMKLHNGSNRFRS). Residues 161–182 (FLLISACWVISLILGGLPIMGW) form a helical membrane-spanning segment. Topologically, residues 183 to 196 (NCISTLPSCSTVLP) are extracellular. A disulfide bridge connects residues Cys-184 and Cys-191. The helical transmembrane segment at 197 to 224 (LYHKHYILFCTTVFTLLLLSIVILYCRI) threads the bilayer. The Cytoplasmic portion of the chain corresponds to 225 to 257 (YSLVRTRSRRLTFRKNISKASRSSEKSLALLKT). Thr-236 carries the phosphothreonine; by PKB/AKT1 modification. A helical membrane pass occupies residues 258-278 (VIIVLGVFIACWAPLFILLLL). 265 to 269 (FIACW) lines the sphing-4-enine 1-phosphate pocket. Residues 279–289 (DVGCKVKTCDI) are Extracellular-facing. Cysteines 282 and 287 form a disulfide. A helical membrane pass occupies residues 290 to 310 (LFRTEYFLVLAVLNSGTNPII). The Cytoplasmic segment spans residues 311–382 (YTLSNKEMRR…MSSGNVNSSS (72 aa)). A lipid anchor (S-palmitoyl cysteine) is attached at Cys-328. The disordered stretch occupies residues 349–382 (EFSRSKSDNSSHPQKDDGDNPETIMSSGNVNSSS). 2 positions are modified to phosphoserine: Ser-351 and Ser-353. Positions 351–366 (SRSKSDNSSHPQKDDG) are enriched in basic and acidic residues. The segment covering 371–382 (TIMSSGNVNSSS) has biased composition (polar residues).

The protein belongs to the G-protein coupled receptor 1 family. As to quaternary structure, interacts with GNAI1 and GNAI3. Interacts with CD69; this interaction promotes S1PR1 degradation. In terms of processing, S1P-induced endothelial cell migration requires the PKB/AKT1-mediated phosphorylation of the third intracellular loop at the Thr-236 residue. Post-translationally, palmitoylated by ZDHHC5. Palmitoylation is required for targeting to plasma membrane, enabling G(i) coupling.

Its subcellular location is the cell membrane. The protein resides in the endosome. It localises to the membrane raft. G-protein coupled receptor for the bioactive lysosphingolipid sphingosine 1-phosphate (S1P) that seems to be coupled to the G(i) subclass of heteromeric G proteins. Signaling leads to the activation of RAC1, SRC, PTK2/FAK1 and MAP kinases. Plays an important role in cell migration, probably via its role in the reorganization of the actin cytoskeleton and the formation of lamellipodia in response to stimuli that increase the activity of the sphingosine kinase SPHK1. Required for normal chemotaxis toward sphingosine 1-phosphate. Required for normal embryonic heart development and normal cardiac morphogenesis. Plays an important role in the regulation of sprouting angiogenesis and vascular maturation. Inhibits sprouting angiogenesis to prevent excessive sprouting during blood vessel development. Required for normal egress of mature T-cells from the thymus into the blood stream and into peripheral lymphoid organs. Plays a role in the migration of osteoclast precursor cells, the regulation of bone mineralization and bone homeostasis. Plays a role in responses to oxidized 1-palmitoyl-2-arachidonoyl-sn-glycero-3-phosphocholine by pulmonary endothelial cells and in the protection against ventilator-induced lung injury. This chain is Sphingosine 1-phosphate receptor 1 (S1PR1), found in Bos taurus (Bovine).